Consider the following 181-residue polypeptide: Isopentenyl-diphosphate Delta-isomerase (181 aa).

Mn(2+) contacts are provided by His-25 and His-32. The region spanning 30 to 164 (PLHLAFSCWL…PWAFSPWMVM (135 aa)) is the Nudix hydrolase domain. Cys-67 is an active-site residue. His-69 is a binding site for Mn(2+). A Mg(2+)-binding site is contributed by Glu-87. 2 residues coordinate Mn(2+): Glu-114 and Glu-116. Glu-116 is an active-site residue.

It belongs to the IPP isomerase type 1 family. As to quaternary structure, homodimer. The cofactor is Mg(2+). Mn(2+) serves as cofactor.

The protein localises to the cytoplasm. The enzyme catalyses isopentenyl diphosphate = dimethylallyl diphosphate. It functions in the pathway isoprenoid biosynthesis; dimethylallyl diphosphate biosynthesis; dimethylallyl diphosphate from isopentenyl diphosphate: step 1/1. Its function is as follows. Catalyzes the 1,3-allylic rearrangement of the homoallylic substrate isopentenyl (IPP) to its highly electrophilic allylic isomer, dimethylallyl diphosphate (DMAPP). The sequence is that of Isopentenyl-diphosphate Delta-isomerase from Salmonella agona (strain SL483).